The following is a 359-amino-acid chain: Photosystem II protein D1 1 (359 aa).

The next 3 helical transmembrane spans lie at 29–46, 118–133, and 142–156; these read YVGW…AATI, HFLI…EWEL, and WICV…AASA. Histidine 118 contributes to the chlorophyll a binding site. Tyrosine 126 serves as a coordination point for pheophytin a. Residues aspartate 170 and glutamate 189 each contribute to the [CaMn4O5] cluster site. The helical transmembrane segment at 197-218 threads the bilayer; sequence FHMLGVAGVFGGSLFSAMHGSL. Position 198 (histidine 198) interacts with chlorophyll a. A quinone is bound by residues histidine 215 and 264 to 265; that span reads SF. Histidine 215 contacts Fe cation. Histidine 272 lines the Fe cation pocket. A helical membrane pass occupies residues 274 to 288; sequence FLAAWPVVGIWFTAL. Residues histidine 332, glutamate 333, aspartate 342, and alanine 344 each contribute to the [CaMn4O5] cluster site. Positions 345–359 are excised as a propeptide; it reads AAESTPVALQAPAIG.

The protein belongs to the reaction center PufL/M/PsbA/D family. In terms of assembly, PSII is composed of 1 copy each of membrane proteins PsbA, PsbB, PsbC, PsbD, PsbE, PsbF, PsbH, PsbI, PsbJ, PsbK, PsbL, PsbM, PsbT, PsbX, PsbY, PsbZ, Psb30/Ycf12, peripheral proteins PsbO, CyanoQ (PsbQ), PsbU, PsbV and a large number of cofactors. It forms dimeric complexes. It depends on The D1/D2 heterodimer binds P680, chlorophylls that are the primary electron donor of PSII, and subsequent electron acceptors. It shares a non-heme iron and each subunit binds pheophytin, quinone, additional chlorophylls, carotenoids and lipids. D1 provides most of the ligands for the Mn4-Ca-O5 cluster of the oxygen-evolving complex (OEC). There is also a Cl(-1) ion associated with D1 and D2, which is required for oxygen evolution. The PSII complex binds additional chlorophylls, carotenoids and specific lipids. as a cofactor. Tyr-161 forms a radical intermediate that is referred to as redox-active TyrZ, YZ or Y-Z. In terms of processing, C-terminally processed by CtpA; processing is essential to allow assembly of the oxygen-evolving complex and thus photosynthetic growth.

Its subcellular location is the cellular thylakoid membrane. It carries out the reaction 2 a plastoquinone + 4 hnu + 2 H2O = 2 a plastoquinol + O2. In terms of biological role, photosystem II (PSII) is a light-driven water:plastoquinone oxidoreductase that uses light energy to abstract electrons from H(2)O, generating O(2) and a proton gradient subsequently used for ATP formation. It consists of a core antenna complex that captures photons, and an electron transfer chain that converts photonic excitation into a charge separation. The D1/D2 (PsbA/PsbD) reaction center heterodimer binds P680, the primary electron donor of PSII as well as several subsequent electron acceptors. This is Photosystem II protein D1 1 from Parasynechococcus marenigrum (strain WH8102).